We begin with the raw amino-acid sequence, 31 residues long: Cytochrome b6-f complex subunit 6 (31 aa).

The helical transmembrane segment at 4–24 (ITSYFGFLLAALTITSALFIG) threads the bilayer.

Belongs to the PetL family. As to quaternary structure, the 4 large subunits of the cytochrome b6-f complex are cytochrome b6, subunit IV (17 kDa polypeptide, PetD), cytochrome f and the Rieske protein, while the 4 small subunits are PetG, PetL, PetM and PetN. The complex functions as a dimer.

The protein resides in the plastid. It localises to the chloroplast thylakoid membrane. Its function is as follows. Component of the cytochrome b6-f complex, which mediates electron transfer between photosystem II (PSII) and photosystem I (PSI), cyclic electron flow around PSI, and state transitions. PetL is important for photoautotrophic growth as well as for electron transfer efficiency and stability of the cytochrome b6-f complex. The polypeptide is Cytochrome b6-f complex subunit 6 (Citrus sinensis (Sweet orange)).